The primary structure comprises 287 residues: Protease HtpX homolog (287 aa).

The next 2 membrane-spanning stretches (helical) occupy residues 4–24 and 35–53; these read VGLF…VMSL and LLLM…SLAL. Residue His139 participates in Zn(2+) binding. Glu140 is a catalytic residue. Position 143 (His143) interacts with Zn(2+). The next 2 helical transmembrane spans lie at 147–167 and 194–214; these read GDMV…IFLS and AVSM…VMWF. Glu219 serves as a coordination point for Zn(2+).

This sequence belongs to the peptidase M48B family. Requires Zn(2+) as cofactor.

The protein resides in the cell inner membrane. The chain is Protease HtpX homolog from Desulfotalea psychrophila (strain LSv54 / DSM 12343).